The following is a 51-amino-acid chain: Insulin (51 aa).

Cystine bridges form between cysteine 7–cysteine 37, cysteine 19–cysteine 50, and cysteine 36–cysteine 41.

This sequence belongs to the insulin family. In terms of assembly, heterodimer of a B chain and an A chain linked by two disulfide bonds.

It is found in the secreted. In terms of biological role, insulin decreases blood glucose concentration. It increases cell permeability to monosaccharides, amino acids and fatty acids. It accelerates glycolysis, the pentose phosphate cycle, and glycogen synthesis in liver. This is Insulin (INS) from Capra hircus (Goat).